Here is a 137-residue protein sequence, read N- to C-terminus: AVCVSLLGASSIRPLPLHLGQFNNMIKCTIPGSTPWWDFSDYGCYCGYGGSGTPVDQLDRCCQTHDNCYTEAQKFSGCSPYRRKYSYECSEGTLTCKSDNDECAAFVCNCDRLAAICFAGAPYNSNNVDIDLEARCQ.

A signal peptide spans 1–17 (AVCVSLLGASSIRPLPL). 7 disulfides stabilise this stretch: cysteine 28–cysteine 89, cysteine 44–cysteine 136, cysteine 46–cysteine 62, cysteine 61–cysteine 117, cysteine 68–cysteine 110, cysteine 78–cysteine 103, and cysteine 96–cysteine 108. Residues tyrosine 45, glycine 47, and glycine 49 each coordinate Ca(2+). The active site involves histidine 65. Aspartate 66 provides a ligand contact to Ca(2+). Aspartate 111 is an active-site residue.

Ca(2+) serves as cofactor. Expressed by the venom gland.

The protein localises to the secreted. The enzyme catalyses a 1,2-diacyl-sn-glycero-3-phosphocholine + H2O = a 1-acyl-sn-glycero-3-phosphocholine + a fatty acid + H(+). Its function is as follows. Snake venom phospholipase A2 (PLA2) that may act in the hemostasis system of the prey. Exhibits hydrolytic activities, and prefers the anionic micelles (dPPC with deoxycholate) (54 umol/mg/min) to the zwitterionic micelles (dPPC with Triton X-100) (15 umol/mg/min). PLA2 catalyzes the calcium-dependent hydrolysis of the 2-acyl groups in 3-sn-phosphoglycerides. In Walterinnesia aegyptia (Desert black snake), this protein is Acidic phospholipase A2 PL-II.